The chain runs to 135 residues: Large ribosomal subunit protein uL16c (135 aa).

It belongs to the universal ribosomal protein uL16 family. Part of the 50S ribosomal subunit.

Its subcellular location is the plastid. The protein resides in the chloroplast. In Coffea arabica (Arabian coffee), this protein is Large ribosomal subunit protein uL16c.